We begin with the raw amino-acid sequence, 314 residues long: DNA-directed RNA polymerase subunit alpha (314 aa).

The interval Met1–Thr228 is alpha N-terminal domain (alpha-NTD). The alpha C-terminal domain (alpha-CTD) stretch occupies residues Lys245–Asp314.

It belongs to the RNA polymerase alpha chain family. Homodimer. The RNAP catalytic core consists of 2 alpha, 1 beta, 1 beta' and 1 omega subunit. When a sigma factor is associated with the core the holoenzyme is formed, which can initiate transcription.

It carries out the reaction RNA(n) + a ribonucleoside 5'-triphosphate = RNA(n+1) + diphosphate. In terms of biological role, DNA-dependent RNA polymerase catalyzes the transcription of DNA into RNA using the four ribonucleoside triphosphates as substrates. This chain is DNA-directed RNA polymerase subunit alpha, found in Geobacillus thermodenitrificans (strain NG80-2).